The following is a 1847-amino-acid chain: Replication factor C small subunit (1847 aa).

DOD-type homing endonuclease domains lie at 179–311 (WLGY…RFGI), 780–927 (MLGL…ISGI), and 1348–1508 (LLGF…EFEV).

This sequence belongs to the activator 1 small subunits family. RfcS subfamily. As to quaternary structure, heteromultimer composed of small subunits (RfcS) and large subunits (RfcL). Post-translationally, this protein undergoes a protein self splicing that involves a post-translational excision of the intervening region (intein) followed by peptide ligation.

Functionally, part of the RFC clamp loader complex which loads the PCNA sliding clamp onto DNA. The polypeptide is Replication factor C small subunit (rfcS) (Methanocaldococcus jannaschii (strain ATCC 43067 / DSM 2661 / JAL-1 / JCM 10045 / NBRC 100440) (Methanococcus jannaschii)).